A 151-amino-acid polypeptide reads, in one-letter code: MGSDDQSAGDRIQKGFQINYMILRDADSGKIIWQENKDFSAPDQEHEARVPVKILDMRAVSREINFSTIESMENFRLDQKVLFKGRIMEEWFFEMGFVGANTTNTWQSTIEAAPESQMMPAKVLNGNVTIQTSFYDNETLITKSVVRLYYI.

This sequence belongs to the PDE6D/unc-119 family. In terms of assembly, interacts with Pde6.

The protein resides in the nucleus. Its subcellular location is the cytoplasm. In Drosophila simulans (Fruit fly), this protein is Probable cGMP 3',5'-cyclic phosphodiesterase subunit delta.